The chain runs to 95 residues: Hiracin-JM79 immunity factor (95 aa).

Its function is as follows. Imparts immunity to bacteriocin hiracin-JM79 to naturally sensitive host strains. The chain is Hiracin-JM79 immunity factor from Enterococcus hirae.